Consider the following 196-residue polypeptide: Ribosome maturation factor RimP (196 aa).

A disordered region spans residues 163-196 (GLAPSKPTGPAPKRPKPNTNSSSNEPAAKKPRAE).

It belongs to the RimP family.

The protein localises to the cytoplasm. In terms of biological role, required for maturation of 30S ribosomal subunits. The polypeptide is Ribosome maturation factor RimP (Stenotrophomonas maltophilia (strain K279a)).